Reading from the N-terminus, the 311-residue chain is MLSVVPRPVVVRAPSKVNLHLAVGDLRDDGYHELNTVFQALSLSDTVSVAPAETLSVTVRGEDARVVPTDSSNLVWQAAEMLAAESGRRPDVEIAIDKGIPVAGGMAGGSADAAATLVGLNALWQLDLSREELDGFAAKLGSDVPFSLHGGTAVGTGRGERLLPVLSRSTFHWVLALAKVGLSTPTVFRELDRLRADGNPPRLGGPEDLMHALTTGDAATLAPLLGNDLQSAALSLNPGLRRTLRAGVAAGALAGIVSGSGPTCAFLCAEADAAVRVSAELAGAGVCRTVRVASGPVPGARIINDAAEGSH.

The active site involves Lys-16. Pro-101–Ala-111 is a binding site for ATP. The active site involves Asp-143.

The protein belongs to the GHMP kinase family. IspE subfamily.

The enzyme catalyses 4-CDP-2-C-methyl-D-erythritol + ATP = 4-CDP-2-C-methyl-D-erythritol 2-phosphate + ADP + H(+). It participates in isoprenoid biosynthesis; isopentenyl diphosphate biosynthesis via DXP pathway; isopentenyl diphosphate from 1-deoxy-D-xylulose 5-phosphate: step 3/6. Functionally, catalyzes the phosphorylation of the position 2 hydroxy group of 4-diphosphocytidyl-2C-methyl-D-erythritol. This Rhodococcus jostii (strain RHA1) protein is 4-diphosphocytidyl-2-C-methyl-D-erythritol kinase.